The following is a 169-amino-acid chain: Prolyl-tRNA synthetase associated domain-containing protein 1 (169 aa).

Belongs to the PRORSD1 family.

This Mus musculus (Mouse) protein is Prolyl-tRNA synthetase associated domain-containing protein 1 (Prorsd1).